The following is a 694-amino-acid chain: GRB2-associated-binding protein 1 (694 aa).

N-acetylserine is present on Ser2. Residues Glu5–Gly116 form the PH domain. Residues Pro194–Ser203 show a composition bias toward basic and acidic residues. Residues Pro194 to Gly231 form a disordered region. A compositionally biased stretch (polar residues) spans Ala204–His230. A phosphoserine mark is found at Ser251, Ser253, Ser266, and Ser304. The disordered stretch occupies residues Ile309 to Ala378. The span at Asp358–Cys374 shows a compositional bias: polar residues. Residue Thr387 is modified to Phosphothreonine. 2 positions are modified to phosphoserine: Ser402 and Ser454. Disordered stretches follow at residues Pro492–Ala532 and Asp560–Arg656. Polar residues predominate over residues Pro594–Gly611. Tyr627 bears the Phosphotyrosine mark. Thr638 is subject to Phosphothreonine. Position 651 is a phosphoserine (Ser651). Phosphotyrosine is present on Tyr659. Residues Leu668–Lys694 form a disordered region. Residues Ser672–Thr684 are compositionally biased toward basic and acidic residues. Ser683 carries the phosphoserine modification. Over residues Glu685 to Lys694 the composition is skewed to polar residues.

The protein belongs to the GAB family. As to quaternary structure, identified in a complex containing FRS2, GRB2, GAB1, PIK3R1 and SOS1. Forms a tripartite complex containing GAB1, METTL13 and SPRY2. Within the complex interacts with METTL13. Interacts with GRB2 and with other SH2-containing proteins. Interacts with phosphorylated LAT2. Interacts with PTPRJ. Interacts (phosphorylated) with PTPN11. Interacts with HCK. Phosphorylated in response to FGFR1 activation. Phosphorylated on tyrosine residue(s) by the epidermal growth factor receptor (EGFR) and the insulin receptor (INSR). Tyrosine phosphorylation of GAB1 mediates interaction with several proteins that contain SH2 domains. Phosphorylated on tyrosine residues by HCK upon IL6 signaling.

Its function is as follows. Adapter protein that plays a role in intracellular signaling cascades triggered by activated receptor-type kinases. Plays a role in FGFR1 signaling. Probably involved in signaling by the epidermal growth factor receptor (EGFR) and the insulin receptor (INSR). Involved in the MET/HGF-signaling pathway. This chain is GRB2-associated-binding protein 1 (GAB1), found in Bos taurus (Bovine).